A 247-amino-acid polypeptide reads, in one-letter code: 2,3-bisphosphoglycerate-dependent phosphoglycerate mutase (247 aa).

Substrate is bound by residues arginine 8–asparagine 15, threonine 21–glycine 22, arginine 60, glutamate 87–tyrosine 90, lysine 98, arginine 114–arginine 115, and glycine 183–asparagine 184. The Tele-phosphohistidine intermediate role is filled by histidine 9. Glutamate 87 functions as the Proton donor/acceptor in the catalytic mechanism.

It belongs to the phosphoglycerate mutase family. BPG-dependent PGAM subfamily. As to quaternary structure, homodimer.

The catalysed reaction is (2R)-2-phosphoglycerate = (2R)-3-phosphoglycerate. It functions in the pathway carbohydrate degradation; glycolysis; pyruvate from D-glyceraldehyde 3-phosphate: step 3/5. Catalyzes the interconversion of 2-phosphoglycerate and 3-phosphoglycerate. The sequence is that of 2,3-bisphosphoglycerate-dependent phosphoglycerate mutase from Acidovorax ebreus (strain TPSY) (Diaphorobacter sp. (strain TPSY)).